A 460-amino-acid polypeptide reads, in one-letter code: Probable Xaa-Pro aminopeptidase PEPP (460 aa).

4 residues coordinate Mn(2+): Asp256, Asp267, Glu390, and Glu430.

The protein belongs to the peptidase M24B family. It depends on Mn(2+) as a cofactor.

The enzyme catalyses Release of any N-terminal amino acid, including proline, that is linked to proline, even from a dipeptide or tripeptide.. Catalyzes the removal of a penultimate prolyl residue from the N-termini of peptides. The sequence is that of Probable Xaa-Pro aminopeptidase PEPP (PEPP) from Podospora anserina (strain S / ATCC MYA-4624 / DSM 980 / FGSC 10383) (Pleurage anserina).